The sequence spans 565 residues: Tyrosine-protein phosphatase non-receptor type 5 (565 aa).

Residues 1-16 (MNYEGARSERENHAAD) are compositionally biased toward basic and acidic residues. Residues 1-80 (MNYEGARSER…KPPPRGAGSH (80 aa)) are disordered. Pro residues predominate over residues 56–75 (MPPPPPPSPPSDPAQKPPPR). 2 helical membrane passes run 88 to 108 (LCLF…FSGY) and 146 to 166 (LLLV…WHLL). Residues 169-189 (PPEPPTPLPPEDRRQSVSRQP) are disordered. Ser-245 bears the Phosphoserine; by PKA mark. A Phosphothreonine; by MAPK modification is found at Thr-255. A Phosphoserine; by MAPK modification is found at Ser-268. Positions 300–555 (LQAEFFEIPM…QFVHHVMSLY (256 aa)) constitute a Tyrosine-protein phosphatase domain. Substrate-binding positions include Asp-461, 496–502 (CSAGIGR), and Gln-540. The active-site Phosphocysteine intermediate is the Cys-496.

It belongs to the protein-tyrosine phosphatase family. Non-receptor class subfamily. In terms of processing, phosphorylation at Ser-245 by PKA deactivates PTPN5. Phosphorylation at Thr-255 and Ser-268 by MAPKs stabilizes the phosphatase, dephosphorylation of these sites results in ubiquitin-mediated degradation of the active phosphatase.

The protein localises to the endoplasmic reticulum membrane. It carries out the reaction O-phospho-L-tyrosyl-[protein] + H2O = L-tyrosyl-[protein] + phosphate. Its function is as follows. May regulate the activity of several effector molecules involved in synaptic plasticity and neuronal cell survival, including MAPKs, Src family kinases and NMDA receptors. The polypeptide is Tyrosine-protein phosphatase non-receptor type 5 (PTPN5) (Homo sapiens (Human)).